Reading from the N-terminus, the 967-residue chain is Glutamate receptor 2.6 (967 aa).

Positions 1-31 (MSLFNHLLSRALPLWLLFFINFLVLLGKSQQ) are cleaved as a signal peptide. At 32-590 (EVLQVQVGIV…WVFLKPLTRE (559 aa)) the chain is on the extracellular side. Residues asparagine 45, asparagine 57, asparagine 121, asparagine 336, asparagine 345, asparagine 424, and asparagine 550 are each glycosylated (N-linked (GlcNAc...) asparagine). Residues 591–611 (LWFLTAASFLYIGIMVWIFEY) traverse the membrane as a helical segment. At 612-621 (QASGDFRKQS) the chain is on the cytoplasmic side. The helical transmembrane segment at 622–642 (IINKISNVFYFSFSTLFFAHM) threads the bilayer. The Cytoplasmic portion of the chain corresponds to 643 to 651 (RPSESIFTR). A helical transmembrane segment spans residues 652–672 (VLVVVWCFVLLILTQSYTATL). The Extracellular portion of the chain corresponds to 673–832 (TSMLTVQELR…DSPIRLDHHS (160 aa)). Asparagine 795 carries an N-linked (GlcNAc...) asparagine glycan. A helical membrane pass occupies residues 833–853 (FEALFTIVFVVSMLLLLAMLV). The Cytoplasmic segment spans residues 854–967 (CRRYRQESKS…AALFSRIKSA (114 aa)). Residues 864–874 (GEINANNSPTD) show a composition bias toward polar residues. The disordered stretch occupies residues 864-913 (GEINANNSPTDGNMRAPPNQPTDDNMRAPTSPPIDDQVLEPPGPALNEAD).

The protein belongs to the glutamate-gated ion channel (TC 1.A.10.1) family. As to quaternary structure, may form heteromers. In terms of tissue distribution, expressed predominantly in roots.

The protein resides in the membrane. Functionally, glutamate-gated receptor that probably acts as a non-selective cation channel. May be involved in light-signal transduction and calcium homeostasis via the regulation of calcium influx into cells. The chain is Glutamate receptor 2.6 (GLR2.6) from Arabidopsis thaliana (Mouse-ear cress).